The sequence spans 122 residues: Large ribosomal subunit protein uL14 (122 aa).

This sequence belongs to the universal ribosomal protein uL14 family. Part of the 50S ribosomal subunit. Forms a cluster with proteins L3 and L19. In the 70S ribosome, L14 and L19 interact and together make contacts with the 16S rRNA in bridges B5 and B8.

In terms of biological role, binds to 23S rRNA. Forms part of two intersubunit bridges in the 70S ribosome. The sequence is that of Large ribosomal subunit protein uL14 from Thermus aquaticus.